Consider the following 307-residue polypeptide: Small ribosomal subunit protein uS2 (307 aa).

Residues 256 to 307 are disordered; that stretch reads GGEAEQAAVDATGGAATEETPAAESTGAASEAAAVSEAAEPATEQPAADAEA. A compositionally biased stretch (low complexity) spans 259–307; that stretch reads AEQAAVDATGGAATEETPAAESTGAASEAAAVSEAAEPATEQPAADAEA.

The protein belongs to the universal ribosomal protein uS2 family.

In Nocardioides sp. (strain ATCC BAA-499 / JS614), this protein is Small ribosomal subunit protein uS2.